A 490-amino-acid polypeptide reads, in one-letter code: Katanin p60 ATPase-containing subunit A-like 1 (490 aa).

N-acetylmethionine is present on M1. The interval 95–184 (DPAVWPPPVP…DGEMPKFDGA (90 aa)) is disordered. A compositionally biased stretch (basic and acidic residues) spans 116–127 (PNREVRPLRKEM). Residues 128–139 (AGVGARGPVGRA) are compositionally biased toward low complexity. The segment covering 143–169 (SKSEKPSTSRDKDCRARGRDDKGRKNM) has biased composition (basic and acidic residues). Position 174 is a phosphoserine (S174). 248-255 (GPPGTGKT) is a binding site for ATP.

The protein belongs to the AAA ATPase family. Katanin p60 subunit A1 subfamily. A-like 1 sub-subfamily. In terms of assembly, interacts with KATNB1 and KATNBL1.

The protein localises to the cytoplasm. It localises to the cytoskeleton. The protein resides in the spindle pole. It is found in the spindle. The catalysed reaction is n ATP + n H2O + a microtubule = n ADP + n phosphate + (n+1) alpha/beta tubulin heterodimers.. Its function is as follows. Regulates microtubule dynamics in Sertoli cells, a process that is essential for spermiogenesis and male fertility. Severs microtubules in an ATP-dependent manner, promoting rapid reorganization of cellular microtubule arrays. Has microtubule-severing activity in vitro. This is Katanin p60 ATPase-containing subunit A-like 1 from Papio anubis (Olive baboon).